Reading from the N-terminus, the 236-residue chain is Adenosine 5'-phosphosulfate reductase (236 aa).

[4Fe-4S] cluster-binding residues include Cys-122, Cys-123, Cys-205, and Cys-208. Catalysis depends on Cys-231, which acts as the Nucleophile; cysteine thiosulfonate intermediate.

It belongs to the PAPS reductase family. CysH subfamily. Requires [4Fe-4S] cluster as cofactor.

It localises to the cytoplasm. The enzyme catalyses [thioredoxin]-disulfide + sulfite + AMP + 2 H(+) = adenosine 5'-phosphosulfate + [thioredoxin]-dithiol. It functions in the pathway sulfur metabolism; hydrogen sulfide biosynthesis; sulfite from sulfate. Its function is as follows. Catalyzes the formation of sulfite from adenosine 5'-phosphosulfate (APS) using thioredoxin as an electron donor. This Mycolicibacterium smegmatis (strain ATCC 700084 / mc(2)155) (Mycobacterium smegmatis) protein is Adenosine 5'-phosphosulfate reductase.